The sequence spans 425 residues: Serine--tRNA ligase (425 aa).

An L-serine-binding site is contributed by 233 to 235 (TAE). Residue 264-266 (RAE) coordinates ATP. E287 is a binding site for L-serine. 351–354 (EISS) provides a ligand contact to ATP. S387 provides a ligand contact to L-serine.

This sequence belongs to the class-II aminoacyl-tRNA synthetase family. Type-1 seryl-tRNA synthetase subfamily. As to quaternary structure, homodimer. The tRNA molecule binds across the dimer.

The protein localises to the cytoplasm. The catalysed reaction is tRNA(Ser) + L-serine + ATP = L-seryl-tRNA(Ser) + AMP + diphosphate + H(+). The enzyme catalyses tRNA(Sec) + L-serine + ATP = L-seryl-tRNA(Sec) + AMP + diphosphate + H(+). It functions in the pathway aminoacyl-tRNA biosynthesis; selenocysteinyl-tRNA(Sec) biosynthesis; L-seryl-tRNA(Sec) from L-serine and tRNA(Sec): step 1/1. In terms of biological role, catalyzes the attachment of serine to tRNA(Ser). Is also able to aminoacylate tRNA(Sec) with serine, to form the misacylated tRNA L-seryl-tRNA(Sec), which will be further converted into selenocysteinyl-tRNA(Sec). The polypeptide is Serine--tRNA ligase (Clostridium perfringens (strain 13 / Type A)).